A 334-amino-acid polypeptide reads, in one-letter code: MTGSLFKGNFWSTDILSTIGYDSIIQHLNNGRKNCKEFEDFLKERASIEEKYGKDLLNLSRKKPCGQSEINTLKRALEVFKQQVDNVAQCHIQLAQTLREEARKMEEFREKQKLQRKKTETIMDAAHKQRNAQFKKAMDAKKNYEQKCRDKDEAEQAVHRSANVANQRQQEKLFVKLATSKTAVEDSDKAYMLHINMLEKVREDWQSEHIKACEVFEAQECERINFFRNALWLHLNQLSQQCVANDEMYEQVRKSLETCSIEKDIQYFVNQRKTGQTPPAPIMYENFYSPQRNAAPPGKTTGPNPARRGPLPVPKRIPDDPDYSVVEDYSLLYQ.

In terms of domain architecture, F-BAR spans 4–264 (SLFKGNFWST…SLETCSIEKD (261 aa)). A coiled-coil region spans residues 66–163 (GQSEINTLKR…AEQAVHRSAN (98 aa)). Positions 288-322 (YSPQRNAAPPGKTTGPNPARRGPLPVPKRIPDDPD) are disordered. Residues Tyr323 and Tyr329 each carry the phosphotyrosine modification.

In terms of processing, phosphorylated on tyrosine. Expressed in macrophage-containing tissues, including bone marrow, spleen, liver, kidney, intestine and brain.

It is found in the cytoplasm. It localises to the membrane. Its function is as follows. Binds to F-actin. May be involved in regulation of the actin cytoskeleton. The polypeptide is Proline-serine-threonine phosphatase-interacting protein 2 (Pstpip2) (Mus musculus (Mouse)).